We begin with the raw amino-acid sequence, 179 residues long: Large ribosomal subunit protein uL5 (179 aa).

The protein belongs to the universal ribosomal protein uL5 family. In terms of assembly, part of the 50S ribosomal subunit; part of the 5S rRNA/L5/L18/L25 subcomplex. Contacts the 5S rRNA and the P site tRNA. Forms a bridge to the 30S subunit in the 70S ribosome.

Functionally, this is one of the proteins that bind and probably mediate the attachment of the 5S RNA into the large ribosomal subunit, where it forms part of the central protuberance. In the 70S ribosome it contacts protein S13 of the 30S subunit (bridge B1b), connecting the 2 subunits; this bridge is implicated in subunit movement. Contacts the P site tRNA; the 5S rRNA and some of its associated proteins might help stabilize positioning of ribosome-bound tRNAs. The chain is Large ribosomal subunit protein uL5 from Vibrio campbellii (strain ATCC BAA-1116).